Consider the following 166-residue polypeptide: Large ribosomal subunit protein uL10 (166 aa).

Belongs to the universal ribosomal protein uL10 family. As to quaternary structure, part of the ribosomal stalk of the 50S ribosomal subunit. The N-terminus interacts with L11 and the large rRNA to form the base of the stalk. The C-terminus forms an elongated spine to which L12 dimers bind in a sequential fashion forming a multimeric L10(L12)X complex.

Functionally, forms part of the ribosomal stalk, playing a central role in the interaction of the ribosome with GTP-bound translation factors. The sequence is that of Large ribosomal subunit protein uL10 from Bacillus pumilus (strain SAFR-032).